We begin with the raw amino-acid sequence, 498 residues long: Cytochrome P450 71B5 (498 aa).

The helical transmembrane segment at 3–23 (IFLCFLLLLPLSLIFLKKLLP) threads the bilayer. Position 439 (cysteine 439) interacts with heme.

This sequence belongs to the cytochrome P450 family. Heme is required as a cofactor.

The protein localises to the membrane. The polypeptide is Cytochrome P450 71B5 (CYP71B5) (Arabidopsis thaliana (Mouse-ear cress)).